Here is a 295-residue protein sequence, read N- to C-terminus: Tyrosine recombinase XerC (295 aa).

One can recognise a Core-binding (CB) domain in the interval 1–85 (MQNALQKYYD…ALRQFLAYLV (85 aa)). The region spanning 106–285 (YLPKNIDQEQ…DFKHLTDVYD (180 aa)) is the Tyr recombinase domain. Residues arginine 145, lysine 169, histidine 237, arginine 240, and histidine 263 contribute to the active site. Tyrosine 272 acts as the O-(3'-phospho-DNA)-tyrosine intermediate in catalysis.

It belongs to the 'phage' integrase family. XerC subfamily. Forms a cyclic heterotetrameric complex composed of two molecules of XerC and two molecules of XerD.

The protein localises to the cytoplasm. In terms of biological role, site-specific tyrosine recombinase, which acts by catalyzing the cutting and rejoining of the recombining DNA molecules. The XerC-XerD complex is essential to convert dimers of the bacterial chromosome into monomers to permit their segregation at cell division. It also contributes to the segregational stability of plasmids. In Actinobacillus succinogenes (strain ATCC 55618 / DSM 22257 / CCUG 43843 / 130Z), this protein is Tyrosine recombinase XerC.